The sequence spans 478 residues: G2/mitotic-specific cyclin-B (478 aa).

Residues 1–153 (MNENDENGPS…KTIQQEEPPR (153 aa)) form a disordered region. Residues 16 to 31 (AKAAALTTDAPAANGA) show a composition bias toward low complexity. Over residues 65–74 (DNGETKDAKK) the composition is skewed to basic and acidic residues. Over residues 77-102 (SKTGLTSKATMQSGGVQKLSRSNLSR) the composition is skewed to polar residues. Over residues 110–121 (NNVKKPATEAKR) the composition is skewed to basic and acidic residues. A compositionally biased stretch (polar residues) spans 133-145 (KRTSSQKSLQEKT).

Belongs to the cyclin family. Cyclin AB subfamily.

Its function is as follows. Essential for the control of the cell cycle at the G2/M (mitosis) transition. Interacts with the CDC2 protein kinase to form MPF. G2/M cyclins accumulate steadily during G2 and are abruptly destroyed at mitosis. In Emericella nidulans (strain FGSC A4 / ATCC 38163 / CBS 112.46 / NRRL 194 / M139) (Aspergillus nidulans), this protein is G2/mitotic-specific cyclin-B (nimE).